The chain runs to 281 residues: Apolipoprotein Eb (281 aa).

The N-terminal stretch at 1-18 is a signal peptide; the sequence is MRSLVVFFALAVLTGCQA. Positions 19 to 24 are excised as a propeptide; the sequence is RSLFQA. The segment at 34–66 is 3 X approximate tandem repeats; that stretch reads MVDRFWQYVSELNTQTDGMVQNIKGSQLSRELD. Repeat copies occupy residues 67 to 88, 89 to 110, 111 to 132, 133 to 154, 155 to 176, 177 to 199, 200 to 227, 228 to 249, and 254 to 281. Residues 67 to 281 are 9 X 22 AA approximate tandem repeats; it reads TLITDTMAEL…EATAALPTQA (215 aa).

Belongs to the apolipoprotein A1/A4/E family. Homotetramer.

The protein resides in the secreted. The protein localises to the extracellular space. It is found in the extracellular matrix. APOE is an apolipoprotein, a protein associating with lipid particles, that mainly functions in lipoprotein-mediated lipid transport between organs via the plasma and interstitial fluids. APOE is a core component of plasma lipoproteins and is involved in their production, conversion and clearance. Apolipoproteins are amphipathic molecules that interact both with lipids of the lipoprotein particle core and the aqueous environment of the plasma. This chain is Apolipoprotein Eb (apoeb), found in Danio rerio (Zebrafish).